A 349-amino-acid chain; its full sequence is Green-sensitive opsin-4 (349 aa).

At 1-36 (MNGTEGNNFYIPLSNRTGLARSPYEYPQYYLAEPWQ) the chain is on the extracellular side. Residues Asn-2 and Asn-15 are each glycosylated (N-linked (GlcNAc...) asparagine). A helical membrane pass occupies residues 37-61 (FKLLAVYMFFLICLGFPINGLTLLV). The Cytoplasmic segment spans residues 62-73 (TAQHKKLRQPLN). A helical membrane pass occupies residues 74 to 99 (FILVNLAVAGTIMVCFGFTVTFYTAI). The Extracellular segment spans residues 100–113 (NGYFVLGPTGCAIE). Cysteines 110 and 187 form a disulfide. The chain crosses the membrane as a helical span at residues 114 to 133 (GFMATLGGEVALWSLVVLAV). Topologically, residues 134–152 (ERYIVVCKPMGSFKFSASH) are cytoplasmic. The helical transmembrane segment at 153-176 (AFAGCAFTWVMAMACAAPPLVGWS) threads the bilayer. The Extracellular portion of the chain corresponds to 177–202 (RYIPEGMQCSCGPDYYTLNPEYNNES). The N-linked (GlcNAc...) asparagine glycan is linked to Asn-200. Residues 203–230 (YVLYMFICHFILPVTIIFFTYGRLVCTV) traverse the membrane as a helical segment. Over 231-252 (KAAAAQQQESESTQKAEREVTR) the chain is Cytoplasmic. A helical membrane pass occupies residues 253-276 (MVILMVLGFLIAWTPYATVAAWIF). At 277–284 (FNKGAAFS) the chain is on the extracellular side. A helical membrane pass occupies residues 285–309 (AQFMAVPAFFSKTSALYNPVIYVLL). N6-(retinylidene)lysine is present on Lys-296. Residues 310–349 (NKQFRNCMLTTLFCGKNPLGDDESSTVSTSKTEVSSVSPA) are Cytoplasmic-facing. The disordered stretch occupies residues 329 to 349 (GDDESSTVSTSKTEVSSVSPA). A compositionally biased stretch (low complexity) spans 334-349 (STVSTSKTEVSSVSPA).

The protein belongs to the G-protein coupled receptor 1 family. Opsin subfamily. Phosphorylated on some or all of the serine and threonine residues present in the C-terminal region. Retinal double cone accessory photoreceptor cell outer segments.

It localises to the membrane. Functionally, visual pigments are the light-absorbing molecules that mediate vision. They consist of an apoprotein, opsin, covalently linked to cis-retinal. This is Green-sensitive opsin-4 (opn1mw4) from Danio rerio (Zebrafish).